The sequence spans 113 residues: MNTVRVTFLLVFVLAVSLGQADKDENRMEMQEKTEQGKSYLDFAENLLLQKLEELEAKLLEEDSEESRNSRQKRCIGEGVPCDENDPRCCSGLVCLKPTLHGIRYKSYYCYKK.

Residues 1-21 (MNTVRVTFLLVFVLAVSLGQA) form the signal peptide. A propeptide spanning residues 22–74 (DKDENRMEMQEKTEQGKSYLDFAENLLLQKLEELEAKLLEEDSEESRNSRQKR) is cleaved from the precursor. Basic and acidic residues predominate over residues 60-69 (LEEDSEESRN). Residues 60 to 83 (LEEDSEESRNSRQKRCIGEGVPCD) are disordered. 3 disulfides stabilise this stretch: Cys-75-Cys-90, Cys-82-Cys-95, and Cys-89-Cys-110.

This sequence belongs to the neurotoxin 14 (magi-1) family. 01 (HNTX-16) subfamily. In terms of tissue distribution, expressed by the venom gland.

It is found in the secreted. In terms of biological role, probable ion channel inhibitor. This is U11-theraphotoxin-Hhn1t from Cyriopagopus hainanus (Chinese bird spider).